Reading from the N-terminus, the 117-residue chain is Large ribosomal subunit protein bL20 (117 aa).

Belongs to the bacterial ribosomal protein bL20 family.

Functionally, binds directly to 23S ribosomal RNA and is necessary for the in vitro assembly process of the 50S ribosomal subunit. It is not involved in the protein synthesizing functions of that subunit. The polypeptide is Large ribosomal subunit protein bL20 (rplT) (Synechocystis sp. (strain ATCC 27184 / PCC 6803 / Kazusa)).